The chain runs to 311 residues: Methionyl-tRNA formyltransferase (311 aa).

A (6S)-5,6,7,8-tetrahydrofolate-binding site is contributed by 110–113; it reads SLLP.

This sequence belongs to the Fmt family.

The catalysed reaction is L-methionyl-tRNA(fMet) + (6R)-10-formyltetrahydrofolate = N-formyl-L-methionyl-tRNA(fMet) + (6S)-5,6,7,8-tetrahydrofolate + H(+). Attaches a formyl group to the free amino group of methionyl-tRNA(fMet). The formyl group appears to play a dual role in the initiator identity of N-formylmethionyl-tRNA by promoting its recognition by IF2 and preventing the misappropriation of this tRNA by the elongation apparatus. The sequence is that of Methionyl-tRNA formyltransferase from Streptococcus pneumoniae serotype 19F (strain G54).